The chain runs to 601 residues: MESITFGVLTISDTCWQEPEKDTSGPILRQLIGETFANTQVIGNIVPDEKDIIQQELRKWIDREELRVILTTGGTGFAPRDVTPEATRQLLEKECPQLSMYITLESIKQTQYAALSRGLCGIAGNTLILNLPGSEKAVKECFQTISALLPHAVHLIGDDVSLVRKTHAEVQGSAQKSHICPHKTGTGTDSDRNSPYPMLPVQEVLSIIFNTVQKTANLNKILLEMNAPVNIPPFRASIKDGYAMKSTGFSGTKRVLGCIAAGDSPNSLPLAEDECYKINTGAPLPLEADCVVQVEDTKLLQLDKNGQESLVDILVEPQAGLDVRPVGYDLSTNDRIFPALDPSPVVVKSLLASVGNRLILSKPKVAIVSTGSELCSPRNQLTPGKIFDSNTTMLTELLVYFGFNCMHTCVLSDSFQRTKESLLELFEVVDFVICSGGVSMGDKDFVKSVLEDLQFRIHCGRVNIKPGKPMTFASRKDKYFFGLPGNPVSAFVTFHLFALPAIRFAAGWDRCKCSLSVLNVKLLNDFSLDSRPEFVRASVISKSGELYASVNGNQISSRLQSIVGADVLINLPARTSDRPLAKAGEIFPASVLRFDFISKYE.

The interval 3-153 (SITFGVLTIS…TISALLPHAV (151 aa)) is MPT adenylyltransferase. The disordered stretch occupies residues 173–195 (SAQKSHICPHKTGTGTDSDRNSP). The segment at 184–596 (TGTGTDSDRN…FPASVLRFDF (413 aa)) is MPT Mo-transferase. Ser376 carries the post-translational modification Phosphoserine.

The protein in the N-terminal section; belongs to the MoaB/Mog family. This sequence in the C-terminal section; belongs to the MoeA family. Mg(2+) serves as cofactor.

The enzyme catalyses molybdopterin + ATP + H(+) = adenylyl-molybdopterin + diphosphate. It carries out the reaction adenylyl-molybdopterin + molybdate = Mo-molybdopterin + AMP + H(+). It functions in the pathway cofactor biosynthesis; molybdopterin biosynthesis. Functionally, catalyzes two steps in the biosynthesis of the molybdenum cofactor. In the first step, molybdopterin is adenylated. Subsequently, molybdate is inserted into adenylated molybdopterin and AMP is released. This chain is Molybdenum cofactor synthesis protein cinnamon (cin), found in Drosophila melanogaster (Fruit fly).